The primary structure comprises 214 residues: Small ribosomal subunit protein uS5 (214 aa).

An S5 DRBM domain is found at 55-118; sequence LKYERLDVGI…RNAKLNITPV (64 aa).

This sequence belongs to the universal ribosomal protein uS5 family. Part of the 30S ribosomal subunit. Contacts protein S4.

Its function is as follows. With S4 and S12 plays an important role in translational accuracy. The protein is Small ribosomal subunit protein uS5 of Staphylothermus marinus (strain ATCC 43588 / DSM 3639 / JCM 9404 / F1).